Consider the following 288-residue polypeptide: CBY1-interacting BAR domain-containing protein 1 (288 aa).

A mitochondrion-targeting transit peptide spans 1-47 (MLRRSLENRDAQTRQLQDAVTNVEKHFGELCQIFAAYVRKTARLRDK). Positions 10-220 (DAQTRQLQDA…KIDEEEDLEV (211 aa)) are BAR-like. The stretch at 107–176 (KMKRDDLKAT…ETIDNFEKQK (70 aa)) forms a coiled coil. The segment at 266 to 288 (RKDHQTEDDDEEDEDLDVTEEEN) is disordered. Over residues 271–288 (TEDDDEEDEDLDVTEEEN) the composition is skewed to acidic residues.

It belongs to the CIBAR family. Homodimer (via BAR-like domain). Heterodimer with FAM92B (via BAR-like domains). Interacts (via BAR-like domain) with CBY1; this interaction is required for targeting FAM92A to centriole and cilium basal body. Interacts (via BAR-like domain) with CBY3; both proteins form a ninefold symmetric structure at the flagellar base; are recruited to the annulus in a mutually dependent manner and regulate annulus positionning.

Its subcellular location is the cytoplasm. The protein localises to the cytoskeleton. It localises to the microtubule organizing center. It is found in the centrosome. The protein resides in the centriole. Its subcellular location is the cilium basal body. The protein localises to the cell projection. It localises to the cilium. It is found in the nucleus. The protein resides in the mitochondrion inner membrane. Its subcellular location is the flagellum. Functionally, plays a critical role in regulating mitochondrial ultrastructure and function by maintaining the integrity of mitochondrial morphology, particularly the organization of cristae. Preferentially binds to negatively charged phospholipids like cardiolipin and phosphatidylinositol 4,5-bisphosphate enhancing its interaction with mitochondrial membranes. Induces membrane curvature and tubulation, which are critical for maintaining mitochondrial ultrastructure and the organization of cristae. Plays a crucial role in ciliogenesis. May play a role in limb development through its role in ciliogenesis. Plays a key role in the correct positioning of the annulus, a septin-based ring structure in the sperm flagellum, serving both as a physical barrier and a membrane diffusion barrier that separates the midpiece (MP) from the principal piece (PP). This positioning is essential for proper sperm motility and function. Interacts with CBY3 to form a complex which localizes to the curved membrane region of the flagellar pocket. By doing so, may provide stability and rigidity to the periannular membrane to prevent membrane deformation. This function is crucial for halting annulus migration at the proximal end of the fibrous sheath-containing PP. This is CBY1-interacting BAR domain-containing protein 1 from Bos taurus (Bovine).